The sequence spans 416 residues: Isocitrate dehydrogenase [NADP] (416 aa).

NADP(+) is bound by residues 77-79 (TIT) and Arg-84. Thr-79 is a substrate binding site. Substrate is bound by residues 96–102 (SPNGTIR), Arg-111, and Arg-134. Asp-254 lines the Mn(2+) pocket. NADP(+) is bound at residue Lys-262. A Mn(2+)-binding site is contributed by Asp-277. Residues 312 to 317 (GTVTRH) and Asn-330 contribute to the NADP(+) site.

This sequence belongs to the isocitrate and isopropylmalate dehydrogenases family. In terms of assembly, heterodimer. Requires Mg(2+) as cofactor. The cofactor is Mn(2+).

The protein localises to the cytoplasm. It carries out the reaction D-threo-isocitrate + NADP(+) = 2-oxoglutarate + CO2 + NADPH. Its function is as follows. May supply 2-oxoglutarate for amino acid biosynthesis and ammonia assimilation via the glutamine synthetase/glutamate synthase (GS/GOGAT) pathway. The protein is Isocitrate dehydrogenase [NADP] (ICDH-1) of Solanum tuberosum (Potato).